Reading from the N-terminus, the 153-residue chain is 6,7-dimethyl-8-ribityllumazine synthase (153 aa).

Residues F22, 56-58, and 80-82 each bind 5-amino-6-(D-ribitylamino)uracil; these read AFE and TVI. 85–86 is a (2S)-2-hydroxy-3-oxobutyl phosphate binding site; sequence ST. The active-site Proton donor is the H88. A 5-amino-6-(D-ribitylamino)uracil-binding site is contributed by F113. Residue R127 coordinates (2S)-2-hydroxy-3-oxobutyl phosphate.

It belongs to the DMRL synthase family. In terms of assembly, forms an icosahedral capsid composed of 60 subunits, arranged as a dodecamer of pentamers.

The catalysed reaction is (2S)-2-hydroxy-3-oxobutyl phosphate + 5-amino-6-(D-ribitylamino)uracil = 6,7-dimethyl-8-(1-D-ribityl)lumazine + phosphate + 2 H2O + H(+). The protein operates within cofactor biosynthesis; riboflavin biosynthesis; riboflavin from 2-hydroxy-3-oxobutyl phosphate and 5-amino-6-(D-ribitylamino)uracil: step 1/2. In terms of biological role, catalyzes the formation of 6,7-dimethyl-8-ribityllumazine by condensation of 5-amino-6-(D-ribitylamino)uracil with 3,4-dihydroxy-2-butanone 4-phosphate. This is the penultimate step in the biosynthesis of riboflavin. The chain is 6,7-dimethyl-8-ribityllumazine synthase from Actinobacillus pleuropneumoniae (Haemophilus pleuropneumoniae).